The following is a 190-amino-acid chain: UPF0301 protein Reut_A0705 (190 aa).

Belongs to the UPF0301 (AlgH) family.

This is UPF0301 protein Reut_A0705 from Cupriavidus pinatubonensis (strain JMP 134 / LMG 1197) (Cupriavidus necator (strain JMP 134)).